We begin with the raw amino-acid sequence, 855 residues long: Leucine--tRNA ligase (855 aa).

Positions 45–55 match the 'HIGH' region motif; the sequence is PYPSGRLHMGH. The 'KMSKS' region motif lies at 619-623; the sequence is KMSKS. Lys-622 provides a ligand contact to ATP.

It belongs to the class-I aminoacyl-tRNA synthetase family.

The protein localises to the cytoplasm. It carries out the reaction tRNA(Leu) + L-leucine + ATP = L-leucyl-tRNA(Leu) + AMP + diphosphate. The chain is Leucine--tRNA ligase from Hyphomonas neptunium (strain ATCC 15444).